Here is a 245-residue protein sequence, read N- to C-terminus: Type III pantothenate kinase (245 aa).

ATP is bound at residue 6–13 (DQGNTILK). Substrate contacts are provided by residues tyrosine 86 and 93 to 96 (GTDR). Aspartate 95 functions as the Proton acceptor in the catalytic mechanism. Aspartate 116 is a K(+) binding site. Threonine 119 lines the ATP pocket. Threonine 171 serves as a coordination point for substrate.

This sequence belongs to the type III pantothenate kinase family. As to quaternary structure, homodimer. The cofactor is NH4(+). It depends on K(+) as a cofactor.

The protein resides in the cytoplasm. It carries out the reaction (R)-pantothenate + ATP = (R)-4'-phosphopantothenate + ADP + H(+). It functions in the pathway cofactor biosynthesis; coenzyme A biosynthesis; CoA from (R)-pantothenate: step 1/5. In terms of biological role, catalyzes the phosphorylation of pantothenate (Pan), the first step in CoA biosynthesis. This is Type III pantothenate kinase from Azobacteroides pseudotrichonymphae genomovar. CFP2.